Reading from the N-terminus, the 356-residue chain is Protein-arginine kinase (356 aa).

Residues 22-249 enclose the Phosphagen kinase C-terminal domain; that stretch reads FRPISTLSLS…SKILSAETEA (228 aa). Residues 25–29, 172–176, and 202–207 contribute to the ATP site; these read ISTLS, VARAF, and SSLLPL.

This sequence belongs to the ATP:guanido phosphotransferase family.

It carries out the reaction L-arginyl-[protein] + ATP = N(omega)-phospho-L-arginyl-[protein] + ADP + H(+). Functionally, catalyzes the specific phosphorylation of arginine residues in proteins. This Chlamydia muridarum (strain MoPn / Nigg) protein is Protein-arginine kinase.